A 314-amino-acid chain; its full sequence is Glutathione synthetase (314 aa).

One can recognise an ATP-grasp domain in the interval 125 to 309 (KLFVMNFPQL…VAAKVWDTIE (185 aa)). Residue 151 to 207 (RDKHGAVVMKPLHGHGGAAVFRVMPQDMNFGSLFDMFTVTFKEPWVIQQFIPEVKHG) coordinates ATP. Mg(2+)-binding residues include Glu280 and Asn282.

Belongs to the prokaryotic GSH synthase family. Requires Mg(2+) as cofactor. The cofactor is Mn(2+).

The enzyme catalyses gamma-L-glutamyl-L-cysteine + glycine + ATP = glutathione + ADP + phosphate + H(+). Its pathway is sulfur metabolism; glutathione biosynthesis; glutathione from L-cysteine and L-glutamate: step 2/2. This chain is Glutathione synthetase, found in Bradyrhizobium diazoefficiens (strain JCM 10833 / BCRC 13528 / IAM 13628 / NBRC 14792 / USDA 110).